The chain runs to 393 residues: Na(+)/H(+) antiporter NhaA (393 aa).

Transmembrane regions (helical) follow at residues 14–34 (AAGM…NWSV), 60–80 (LLLW…GLEV), 96–116 (MLPL…FLLF), 125–145 (AGWA…LTLL), 155–175 (VFLL…IALF), 179–199 (QVFW…AYMN), 218–238 (VCIL…GFFI), 263–283 (FLIV…GIVL), 292–312 (LGIA…FSWL), 330–350 (IVAV…ITLL), and 362–382 (YAKL…YLAL).

The protein belongs to the NhaA Na(+)/H(+) (TC 2.A.33) antiporter family.

Its subcellular location is the cell inner membrane. The catalysed reaction is Na(+)(in) + 2 H(+)(out) = Na(+)(out) + 2 H(+)(in). Na(+)/H(+) antiporter that extrudes sodium in exchange for external protons. This chain is Na(+)/H(+) antiporter NhaA, found in Pectobacterium atrosepticum (strain SCRI 1043 / ATCC BAA-672) (Erwinia carotovora subsp. atroseptica).